We begin with the raw amino-acid sequence, 382 residues long: Homoserine O-acetyltransferase (382 aa).

The AB hydrolase-1 domain maps to 50-360; sequence NAVLICHALT…DKGHDAFLLD (311 aa). Serine 155 acts as the Nucleophile in catalysis. Arginine 225 is a substrate binding site. Residues aspartate 321 and histidine 354 contribute to the active site. Position 355 (aspartate 355) interacts with substrate.

The protein belongs to the AB hydrolase superfamily. MetX family. Homodimer.

It localises to the cytoplasm. It carries out the reaction L-homoserine + acetyl-CoA = O-acetyl-L-homoserine + CoA. It participates in amino-acid biosynthesis; L-methionine biosynthesis via de novo pathway; O-acetyl-L-homoserine from L-homoserine: step 1/1. Functionally, transfers an acetyl group from acetyl-CoA to L-homoserine, forming acetyl-L-homoserine. The protein is Homoserine O-acetyltransferase of Caulobacter vibrioides (strain ATCC 19089 / CIP 103742 / CB 15) (Caulobacter crescentus).